The following is a 505-amino-acid chain: 2,3-bisphosphoglycerate-independent phosphoglycerate mutase (505 aa).

The Mn(2+) site is built by aspartate 12 and serine 62. Serine 62 (phosphoserine intermediate) is an active-site residue. Residues histidine 123, 153 to 154 (RD), arginine 185, arginine 191, 257 to 260 (RPDR), and lysine 330 contribute to the substrate site. The Mn(2+) site is built by aspartate 397, histidine 401, aspartate 438, histidine 439, and histidine 456.

It belongs to the BPG-independent phosphoglycerate mutase family. Monomer. It depends on Mn(2+) as a cofactor.

It catalyses the reaction (2R)-2-phosphoglycerate = (2R)-3-phosphoglycerate. Its pathway is carbohydrate degradation; glycolysis; pyruvate from D-glyceraldehyde 3-phosphate: step 3/5. In terms of biological role, catalyzes the interconversion of 2-phosphoglycerate and 3-phosphoglycerate. The chain is 2,3-bisphosphoglycerate-independent phosphoglycerate mutase from Staphylococcus saprophyticus subsp. saprophyticus (strain ATCC 15305 / DSM 20229 / NCIMB 8711 / NCTC 7292 / S-41).